The following is a 216-amino-acid chain: LexA repressor 1 (216 aa).

Residues 38–58 (TRQIGAAVGLRSMSSVARHLR) constitute a DNA-binding region (H-T-H motif). Catalysis depends on for autocatalytic cleavage activity residues Ser140 and Lys177.

It belongs to the peptidase S24 family. In terms of assembly, homodimer.

The catalysed reaction is Hydrolysis of Ala-|-Gly bond in repressor LexA.. Represses a number of genes involved in the response to DNA damage (SOS response), including recA and lexA. In the presence of single-stranded DNA, RecA interacts with LexA causing an autocatalytic cleavage which disrupts the DNA-binding part of LexA, leading to derepression of the SOS regulon and eventually DNA repair. The polypeptide is LexA repressor 1 (Nocardia farcinica (strain IFM 10152)).